The primary structure comprises 444 residues: Putative permease IIC component YwbA (444 aa).

Residues 8–421 enclose the PTS EIIC type-3 domain; sequence MEEKIMPVAG…LITCAIYYPF (414 aa). A run of 10 helical transmembrane segments spans residues 31–51, 72–92, 104–124, 138–158, 187–207, 223–243, 246–266, 291–311, 349–371, and 402–422; these read GIILTMPLIIIGSVFLILTSL, LGYPVNASFDIMAMIAAFGIA, LSAGAISIAAFLLATPFEVPF, GIPITLLGSKGLFVAMLIALF, FVALIPGFIIVLLVWLARLLI, LGTPLSILGGSLGGSLIAEFV, LLWSCGIHGASIIGGIMAPIW, FFQIWINVGGSGATLALVLTM, PLLIVPFIIAPLLTITATYIGMS, and SGAVMQLVNLLITCAIYYPFF.

The protein localises to the cell membrane. Functionally, the phosphoenolpyruvate-dependent sugar phosphotransferase system (PTS), a major carbohydrate active -transport system, catalyzes the phosphorylation of incoming sugar substrates concomitant with their translocation across the cell membrane. The polypeptide is Putative permease IIC component YwbA (ywbA) (Bacillus subtilis (strain 168)).